The sequence spans 181 residues: Translationally-controlled tumor protein homolog (181 aa).

In terms of domain architecture, TCTP spans 1 to 181; that stretch reads MLIFKDAFTD…VKEALIEEKQ (181 aa).

It belongs to the TCTP family.

The protein resides in the cytoplasm. Its function is as follows. Involved in calcium binding and microtubule stabilization. This chain is Translationally-controlled tumor protein homolog, found in Brugia malayi (Filarial nematode worm).